A 330-amino-acid chain; its full sequence is Phytanoyl-CoA hydroxylase-interacting protein (330 aa).

A Fibronectin type-III domain is found at 6–115 (TPHSIEVSNI…ETVEFCTGDY (110 aa)). Asn-14 and Asn-325 each carry an N-linked (GlcNAc...) asparagine glycan.

This sequence belongs to the PHYHIP family. Interacts with PHYH and ADGRB1.

Its function is as follows. Its interaction with PHYH suggests a role in the development of the central system. In Bos taurus (Bovine), this protein is Phytanoyl-CoA hydroxylase-interacting protein (PHYHIP).